Consider the following 202-residue polypeptide: dTTP/UTP pyrophosphatase (202 aa).

Catalysis depends on Asp80, which acts as the Proton acceptor.

It belongs to the Maf family. YhdE subfamily. The cofactor is a divalent metal cation.

Its subcellular location is the cytoplasm. It catalyses the reaction dTTP + H2O = dTMP + diphosphate + H(+). It carries out the reaction UTP + H2O = UMP + diphosphate + H(+). Nucleoside triphosphate pyrophosphatase that hydrolyzes dTTP and UTP. May have a dual role in cell division arrest and in preventing the incorporation of modified nucleotides into cellular nucleic acids. The protein is dTTP/UTP pyrophosphatase of Alkalilimnicola ehrlichii (strain ATCC BAA-1101 / DSM 17681 / MLHE-1).